The following is an 88-amino-acid chain: Acyl-CoA-binding domain-containing protein 7 (88 aa).

Residues 3–88 (LQADFDKAAK…AKELIEKYGI (86 aa)) form the ACB domain. Residues R15, 30-34 (YGLYK), K56, and Y75 contribute to the an acyl-CoA site.

The protein belongs to the ACBD7 family.

Functionally, binds medium- and long-chain acyl-CoA esters. The polypeptide is Acyl-CoA-binding domain-containing protein 7 (ACBD7) (Bos taurus (Bovine)).